The primary structure comprises 464 residues: Argininosuccinate lyase (464 aa).

It belongs to the lyase 1 family. Argininosuccinate lyase subfamily.

Its subcellular location is the cytoplasm. It carries out the reaction 2-(N(omega)-L-arginino)succinate = fumarate + L-arginine. It functions in the pathway amino-acid biosynthesis; L-arginine biosynthesis; L-arginine from L-ornithine and carbamoyl phosphate: step 3/3. The sequence is that of Argininosuccinate lyase from Moorella thermoacetica (strain ATCC 39073 / JCM 9320).